Consider the following 260-residue polypeptide: Hydroxyethylthiazole kinase 1 (260 aa).

Methionine 39 lines the substrate pocket. Residues arginine 115 and threonine 160 each coordinate ATP. Glycine 187 is a binding site for substrate.

It belongs to the Thz kinase family. Mg(2+) serves as cofactor.

The catalysed reaction is 5-(2-hydroxyethyl)-4-methylthiazole + ATP = 4-methyl-5-(2-phosphooxyethyl)-thiazole + ADP + H(+). The protein operates within cofactor biosynthesis; thiamine diphosphate biosynthesis; 4-methyl-5-(2-phosphoethyl)-thiazole from 5-(2-hydroxyethyl)-4-methylthiazole: step 1/1. Catalyzes the phosphorylation of the hydroxyl group of 4-methyl-5-beta-hydroxyethylthiazole (THZ). This is Hydroxyethylthiazole kinase 1 from Streptococcus pneumoniae (strain JJA).